Reading from the N-terminus, the 432-residue chain is D-amino acid dehydrogenase (432 aa).

3-17 (VVVLGSGVVGVTSAW) lines the FAD pocket.

This sequence belongs to the DadA oxidoreductase family. FAD is required as a cofactor.

The enzyme catalyses a D-alpha-amino acid + A + H2O = a 2-oxocarboxylate + AH2 + NH4(+). It participates in amino-acid degradation; D-alanine degradation; NH(3) and pyruvate from D-alanine: step 1/1. Functionally, oxidative deamination of D-amino acids. The sequence is that of D-amino acid dehydrogenase from Enterobacter sp. (strain 638).